The following is a 320-amino-acid chain: Bifunctional ligase/repressor BirA (320 aa).

Positions 22 to 41 form a DNA-binding region, H-T-H motif; that stretch reads GEQLGERLGMSRAAINKHIQ. The 189-residue stretch at 66–254 folds into the BPL/LPL catalytic domain; that stretch reads LLDADRIHSQ…KLRAALELFE (189 aa). Biotin is bound by residues 89 to 91, Q112, 116 to 118, and K183; these read STN and RGR.

Belongs to the biotin--protein ligase family.

It catalyses the reaction biotin + L-lysyl-[protein] + ATP = N(6)-biotinyl-L-lysyl-[protein] + AMP + diphosphate + H(+). In terms of biological role, acts both as a biotin--[acetyl-CoA-carboxylase] ligase and a biotin-operon repressor. In the presence of ATP, BirA activates biotin to form the BirA-biotinyl-5'-adenylate (BirA-bio-5'-AMP or holoBirA) complex. HoloBirA can either transfer the biotinyl moiety to the biotin carboxyl carrier protein (BCCP) subunit of acetyl-CoA carboxylase, or bind to the biotin operator site and inhibit transcription of the operon. The polypeptide is Bifunctional ligase/repressor BirA (Salmonella typhimurium (strain LT2 / SGSC1412 / ATCC 700720)).